Consider the following 7388-residue polypeptide: Microtubule-actin cross-linking factor 1, isoforms 1/2/3/4/5 (7388 aa).

The segment at 1-47 (MSSSDEETLSERSCRSERSCRSERSYRSERSGSLSPCPPGDTLPWNL) is disordered. The segment at 1–295 (MSSSDEETLS…VITYVSSIYD (295 aa)) is actin-binding. S4 is subject to Phosphoserine. The segment covering 9 to 30 (LSERSCRSERSCRSERSYRSER) has biased composition (basic and acidic residues). S35 and S57 each carry phosphoserine. Calponin-homology (CH) domains follow at residues 78 to 181 (RVQK…LHFQ) and 194 to 298 (MSAK…DAFP). 2 LRR repeats span residues 148-171 (QRQV…LTLG) and 240-264 (LVDM…VAER). Position 280 is a phosphoserine (S280). LRR repeat units lie at residues 377–399 (LYKL…YHPN) and 441–464 (LNCE…LESG). A Phosphoserine modification is found at S814. Residues 868–925 (KNTISVKAVCDYRQIEITICKNDECVLEDNSQRTKWKVISPTGNEAMVPSVCFLIPPP) enclose the SH3 domain. Residues 1050 to 1073 (ISELKNIRLRLEEYEQRVVKRIQS) form an LRR 5 repeat. S1122 is subject to Phosphoserine. LRR repeat units follow at residues 1128–1154 (VPTL…VYLN), 1187–1210 (LADL…VKDK), and 1257–1282 (HRVI…DYRA). Phosphoserine occurs at positions 1367 and 1376. Plectin repeat units lie at residues 1577-1621 (LVLL…RELQ), 1654-1696 (LKIL…VLES), 1769-1809 (RLLE…CAIL), 1811-1848 (RQLQ…VILE), and 1855-1886 (GLLW…KILS). A phosphoserine mark is found at S2006 and S2051. Residues 2051-2085 (SQNKEYPDREDCTTEKGKKTTVETEDSSVENPEQD) are disordered. The span at 2055–2072 (EYPDREDCTTEKGKKTTV) shows a compositional bias: basic and acidic residues. S2077 is subject to Phosphoserine. Plectin repeat units follow at residues 2290–2332 (LNVL…KLME), 2367–2410 (NVLM…LERQ), 2411–2437 (VVTG…GLVD), 2501–2543 (RLLT…LKRV), 2581–2612 (EVQA…LTNE), and 2686–2730 (LKVL…ASHQ). Disordered regions lie at residues 3013-3034 (EHDS…GKEA) and 3104-3174 (SEPF…NECK). Residues 3115 to 3124 (EGLHYQESDG) show a composition bias toward basic and acidic residues. S3122 bears the Phosphoserine mark. The span at 3129–3158 (TGPSQISKTDKSFQGTTRQETNYQDSWVTS) shows a compositional bias: polar residues. LRR repeat units lie at residues 3239-3262 (LTGE…SIED) and 3264-3283 (VTQR…LFKG). Positions 3321–3332 (EKTPQEKLRESP) are enriched in basic and acidic residues. The disordered stretch occupies residues 3321-3350 (EKTPQEKLRESPGSEQTPFMTAPEGKGNGG). S3331 is subject to Phosphoserine. LRR repeat units lie at residues 3646–3669 (QQDL…IQNR) and 3696–3720 (LTAL…TRVA). Spectrin repeat units follow at residues 3883–3957 (ELQK…NSFK) and 4000–4108 (QYHQ…SLLQ). At S3927 the chain carries Phosphoserine. The LRR 13 repeat unit spans residues 3936-3958 (KGDLRFVTISGQKVLDMENSFKE). LRR repeat units lie at residues 4125 to 4150 (LQSI…VIQE) and 4261 to 4287 (IQEL…ELSS). Residues 4466-4574 (RMEEVHKEAN…TVARQRQLEE (109 aa)) form a Spectrin 3 repeat. S4495, S4496, and S4521 each carry phosphoserine. LRR repeat units lie at residues 4511-4534 (KAFL…LAGL), 4601-4624 (GVLG…QFML), and 4769-4792 (KKRL…RINR). Spectrin repeat units lie at residues 4800–4904 (TQQF…SRLK) and 4909–5012 (KAQK…SLEE). S4836 and S4962 each carry phosphoserine. 3 LRR repeats span residues 5051–5076 (NKNL…YLRN), 5172–5194 (NKIH…MLEE), and 5281–5304 (KEQV…LIQS). 3 Spectrin repeats span residues 5236-5341 (EDFY…QLQE), 5348-5450 (KFQD…QLED), and 5455-5557 (AKQF…LRTL). The residue at position 5435 (T5435) is a Phosphothreonine. The segment at 5583–5603 (EELATSGGQSPTGEQIPQFQQ) is disordered. A compositionally biased stretch (polar residues) spans 5588–5603 (SGGQSPTGEQIPQFQQ). 2 LRR repeats span residues 5695 to 5719 (MALG…AFSI) and 5804 to 5828 (AQLP…QLRE). Spectrin repeat units follow at residues 5783–5885 (NQFW…ALDE), 6005–6110 (LAEK…KLED), 6115–6219 (AVQY…HKLE), 6225–6328 (LGQF…QQLQ), 6333–6439 (QAQG…KLEE), 6443–6547 (LATE…RSLD), 6552–6658 (RAKQ…KLEE), 6665–6766 (QFMD…RLEQ), and 6771–6874 (AEVF…QRLE). Phosphoserine is present on residues S5808 and S6032. K6210 carries the N6-acetyllysine modification. Residues 6496-6519 (RDQIIELDQTGNQLKFLSQKQDVV) form an LRR 24 repeat. The tract at residues 6951-6981 (PTHAPFIEKSRSGGRKSLSQPTPPPMPILSQ) is disordered. S6967 is modified (phosphoserine). EF-hand domains are found at residues 7041 to 7076 (HKKS…SKFP) and 7077 to 7112 (TTKL…NKDA). D7054, D7056, D7058, K7060, E7065, D7090, D7092, D7094, Y7096, and E7101 together coordinate Ca(2+). In terms of domain architecture, GAR spans 7117-7189 (TDADKIEDEV…EFLVKNDPCR (73 aa)). The tract at residues 7117–7388 (TDADKIEDEV…ASPRTPGPKR (272 aa)) is C-terminal tail. The disordered stretch occupies residues 7205-7388 (PEGASQGMTP…ASPRTPGPKR (184 aa)). The segment covering 7225–7259 (SSRAASPTRSSSSASQSNHSCTSMPSSPATPASGT) has biased composition (low complexity). Phosphothreonine is present on T7254. Over residues 7275-7299 (TFHSSRTSLAGDTSNSSSPASTGAK) the composition is skewed to polar residues. Phosphoserine occurs at positions 7279 and 7292. The segment covering 7310 to 7324 (SRPGSRAGSRAGSRA) has biased composition (low complexity). Residues 7313 to 7328 (GSRAGSRAGSRASSRR) are 4 X 4 AA tandem repeats of [GS]-S-R-[AR]. A phosphoserine mark is found at S7330 and S7333. Polar residues predominate over residues 7339-7361 (ETQSACSDTSESSAAGGQGNSRR).

This sequence belongs to the plakin or cytolinker family. As to quaternary structure, isoform 2: Interacts with MAPRE1, CLASP1, CLASP2, AXIN1 and LRP6. Isoform 2: Found in a complex composed of MACF1, APC, AXIN1, CTNNB1 and GSK3B. Isoform 2: Interacts with GOLGA4. Isoform 2: Interacts with CAMSAP3. Post-translationally, phosphorylated on serine residues in the C-terminal tail by GSK3B. Phosphorylation inhibits microtubule-binding and this plays a critical role in bulge stem cell migration and skin wound repair. Wnt-signaling can repress phosphorylation. In terms of tissue distribution, isoform 2: Ubiquitously expressed. Isoform 1: Expressed in cell lines NCI-H460, A-549 and HaCaT. Isoform 4: Expressed in heart, lung, pituitary and placenta, not found in brain, kidney, liver, pancreas or skeletal muscle.

It is found in the cytoplasm. The protein resides in the cytoskeleton. The protein localises to the golgi apparatus. It localises to the cell membrane. Its subcellular location is the cell projection. It is found in the ruffle membrane. Functionally, F-actin-binding protein which plays a role in cross-linking actin to other cytoskeletal proteins and also binds to microtubules. Plays an important role in ERBB2-dependent stabilization of microtubules at the cell cortex. Acts as a positive regulator of Wnt receptor signaling pathway and is involved in the translocation of AXIN1 and its associated complex (composed of APC, CTNNB1 and GSK3B) from the cytoplasm to the cell membrane. Has actin-regulated ATPase activity and is essential for controlling focal adhesions (FAs) assembly and dynamics. Interaction with CAMSAP3 at the minus ends of non-centrosomal microtubules tethers microtubules minus-ends to actin filaments, regulating focal adhesion size and cell migration. May play role in delivery of transport vesicles containing GPI-linked proteins from the trans-Golgi network through its interaction with GOLGA4. Plays a key role in wound healing and epidermal cell migration. Required for efficient upward migration of bulge cells in response to wounding and this function is primarily rooted in its ability to coordinate microtubule dynamics and polarize hair follicle stem cells. As a regulator of actin and microtubule arrangement and stabilization, it plays an essential role in neurite outgrowth, branching and spine formation during brain development. This Homo sapiens (Human) protein is Microtubule-actin cross-linking factor 1, isoforms 1/2/3/4/5.